The chain runs to 126 residues: DNA-directed RNA polymerase I subunit RPA12 (126 aa).

6 residues coordinate Zn(2+): Cys20, Cys23, Cys38, Cys41, Cys87, and Cys90. The C4-type zinc finger occupies 20–41 (CSDCGSVLPLPGAQDTVTCIRC). Residues 83–123 (VDRRCPRCGHEGMAYHTRQMRSADEGQTVFYTCTNCKFQEK) form a TFIIS-type zinc finger. Positions 106-107 (DE) match the Hairpin motif. Residues Cys115 and Cys118 each contribute to the Zn(2+) site.

Belongs to the archaeal RpoM/eukaryotic RPA12/RPB9/RPC11 RNA polymerase family. In terms of assembly, component of the RNA polymerase I (Pol I) complex consisting of 13 subunits: a ten-subunit catalytic core composed of POLR1A/RPA1, POLR1B/RPA2, POLR1C/RPAC1, POLR1D/RPAC2, POLR1H/RPA12, POLR2E/RPABC1, POLR2F/RPABC2, POLR2H/RPABC3, POLR2K/RPABC4 and POLR2L/RPABC5; a mobile stalk subunit POLR1F/RPA43 protruding from the core and additional subunits homologous to general transcription factors POLR1E/RPA49 and POLR1G/RPA34. Part of Pol I pre-initiation complex (PIC), in which Pol I core assembles with RRN3 and promoter-bound UTBF and SL1/TIF-IB complex.

It localises to the nucleus. Its subcellular location is the nucleolus. In terms of biological role, core component of RNA polymerase I (Pol I), a DNA-dependent RNA polymerase which synthesizes ribosomal RNA precursors using the four ribonucleoside triphosphates as substrates. Can mediate Pol I proofreading of the nascent RNA transcript. Anchors into the Pol I active site to monitor transcription fidelity and cleave mis-incorporated 5'-ribonucleotides. The protein is DNA-directed RNA polymerase I subunit RPA12 of Homo sapiens (Human).